Here is a 315-residue protein sequence, read N- to C-terminus: MNYLDFESKIKEIEDKITSLSHVFEDEKTEAEIKKLSKKRLELMESTYSKLTDWQVVQLSRHPDRPYFKDLLPLIFTDFQELHGDRTFGDDLAVIGGLAKLNNKPVMVIGQEKGRDTKSKIKHNFGMMHPEGYRKALRLMKLAEKFNMPVVTFIDTPGAYPGIKAEERGQSEAIARNLLEMSALKVPVVCIVIGEGCSGGALGIGVGDRLLMLQYSYFATISPEGCASILHKTAEKASEVTQMMNITSGRLKELKIVDEVIPEPLGGAHRDYETTATNIRKAVAAELKILSEMTVEQRNSRRYDKLMSFGRFKEA.

The CoA carboxyltransferase C-terminal domain maps to 36–289 (LSKKRLELME…RKAVAAELKI (254 aa)).

Belongs to the AccA family. As to quaternary structure, acetyl-CoA carboxylase is a heterohexamer composed of biotin carboxyl carrier protein (AccB), biotin carboxylase (AccC) and two subunits each of ACCase subunit alpha (AccA) and ACCase subunit beta (AccD).

Its subcellular location is the cytoplasm. The catalysed reaction is N(6)-carboxybiotinyl-L-lysyl-[protein] + acetyl-CoA = N(6)-biotinyl-L-lysyl-[protein] + malonyl-CoA. It functions in the pathway lipid metabolism; malonyl-CoA biosynthesis; malonyl-CoA from acetyl-CoA: step 1/1. Component of the acetyl coenzyme A carboxylase (ACC) complex. First, biotin carboxylase catalyzes the carboxylation of biotin on its carrier protein (BCCP) and then the CO(2) group is transferred by the carboxyltransferase to acetyl-CoA to form malonyl-CoA. The polypeptide is Acetyl-coenzyme A carboxylase carboxyl transferase subunit alpha (Francisella tularensis subsp. holarctica (strain FTNF002-00 / FTA)).